We begin with the raw amino-acid sequence, 600 residues long: Pyranose dehydrogenase (600 aa).

The signal sequence occupies residues methionine 1–glycine 25. N-linked (GlcNAc...) asparagine glycans are attached at residues asparagine 99 and asparagine 114. The residue at position 127 (histidine 127) is a Tele-8alpha-FAD histidine. 5 N-linked (GlcNAc...) asparagine glycosylation sites follow: asparagine 199, asparagine 275, asparagine 342, asparagine 399, and asparagine 507. Histidine 535 (proton acceptor) is an active-site residue. Residue asparagine 546 is glycosylated (N-linked (GlcNAc...) asparagine). The active site involves histidine 579.

This sequence belongs to the GMC oxidoreductase family. Monomer. Requires FAD as cofactor. N-glycosylated.

The protein localises to the secreted. It carries out the reaction pyranose + acceptor = pyranos-2-ulose + reduced acceptor.. The enzyme catalyses pyranose + acceptor = pyranos-3-ulose + reduced acceptor.. The catalysed reaction is pyranose + acceptor = pyranos-2,3-diulose + reduced acceptor.. It catalyses the reaction a pyranoside + acceptor = a pyranosid-3-ulose + reduced acceptor.. It carries out the reaction a pyranoside + acceptor = a pyranosid-3,4-diulose + reduced acceptor.. Catalyzes the single-oxidation or sequential double oxidation reaction of carbohydrates primarily at carbon-2 and/or carbon-3 with the concomitant reduction of the flavin. The enzyme exhibits a broad sugar substrate specificity, oxidizing different aldopyranoses to the corresponding C-1, C-2, C-3 or C-1,2, C-2,3 and C-3,4 (di)dehydro sugars with substrate-specific regioselectivity. Accepts only a narrow range of electron acceptors such as substituted benzoquinones and complexed metal ions and reacts extremely slowly with O(2) as acceptor. May play a role in the natural recycling of plant matter by oxidizing all major monosaccharides in lignocellulose and by reducing quinone compounds or reactive radical species generated during lignin depolymerization. The protein is Pyranose dehydrogenase of Agaricus xanthodermus (Poison yellow meadow mushroom).